A 927-amino-acid polypeptide reads, in one-letter code: Protein LONGIFOLIA 1 (927 aa).

Disordered regions lie at residues 41-198 (TGDE…EGRR), 210-257 (YDER…GHRR), 460-588 (AQKV…SDSN), and 605-626 (YERN…DLGM). Positions 86 to 114 (SSESSSRLSFSSSPCSSSFSSADISTTAS) are enriched in low complexity. Residues 115 to 125 (QFEQPGLSNGE) show a composition bias toward polar residues. A compositionally biased stretch (basic and acidic residues) spans 146–165 (DIRELVRSSIHKETRTRDEE). The segment covering 182–193 (KESSPSRNSNEW) has biased composition (polar residues). A compositionally biased stretch (basic and acidic residues) spans 210-226 (YDERETRKTGAKLKETP). Over residues 232-245 (SRSNSFRSARSSCS) the composition is skewed to low complexity. Polar residues-rich tracts occupy residues 483–500 (QTES…QSKS) and 538–553 (NKNQ…TESA). Composition is skewed to basic and acidic residues over residues 569–584 (SEDR…RSLR) and 605–616 (YERNSDITEQHT).

In terms of assembly, interacts (via C-terminus) with TON1A and TON1B. Expressed in roots, petioles, leaf blades and floral organs.

It is found in the nucleus. In terms of biological role, in association with LNG2, regulates leaf morphology by promoting longitudinal polar cell elongation independently of ROT3. The polypeptide is Protein LONGIFOLIA 1 (LNG1) (Arabidopsis thaliana (Mouse-ear cress)).